The primary structure comprises 384 residues: Flap endonuclease 1 (384 aa).

Residues 1–108 (MGIHKLMDLL…GELARRQKAK (108 aa)) form an N-domain region. A Mg(2+)-binding site is contributed by aspartate 34. Arginine 74 contributes to the DNA binding site. Mg(2+) is bound by residues aspartate 90, glutamate 162, glutamate 164, aspartate 183, and aspartate 185. The segment at 126–254 (EALKQEQRNL…VNAFKLITEH (129 aa)) is I-domain. Glutamate 162 serves as a coordination point for DNA. 2 residues coordinate DNA: glycine 232 and aspartate 234. Position 234 (aspartate 234) interacts with Mg(2+). Residues 340-384 (AKEHKGSQTRLNDFFKVQPKDTSSTSKASKKPTNTKSANKKGGKK) form a disordered region. The tract at residues 346–354 (SQTRLNDFF) is interaction with PCNA. Residues 359-376 (KDTSSTSKASKKPTNTKS) are compositionally biased toward low complexity.

Belongs to the XPG/RAD2 endonuclease family. FEN1 subfamily. As to quaternary structure, interacts with PCNA. Three molecules of FEN1 bind to one PCNA trimer with each molecule binding to one PCNA monomer. PCNA stimulates the nuclease activity without altering cleavage specificity. It depends on Mg(2+) as a cofactor. Post-translationally, phosphorylated. Phosphorylation upon DNA damage induces relocalization to the nuclear plasma.

It localises to the nucleus. It is found in the nucleolus. The protein resides in the nucleoplasm. The protein localises to the mitochondrion. Structure-specific nuclease with 5'-flap endonuclease and 5'-3' exonuclease activities involved in DNA replication and repair. During DNA replication, cleaves the 5'-overhanging flap structure that is generated by displacement synthesis when DNA polymerase encounters the 5'-end of a downstream Okazaki fragment. It enters the flap from the 5'-end and then tracks to cleave the flap base, leaving a nick for ligation. Also involved in the long patch base excision repair (LP-BER) pathway, by cleaving within the apurinic/apyrimidinic (AP) site-terminated flap. Acts as a genome stabilization factor that prevents flaps from equilibrating into structures that lead to duplications and deletions. Also possesses 5'-3' exonuclease activity on nicked or gapped double-stranded DNA, and exhibits RNase H activity. Also involved in replication and repair of rDNA and in repairing mitochondrial DNA. This chain is Flap endonuclease 1, found in Tetrahymena thermophila (strain SB210).